We begin with the raw amino-acid sequence, 134 residues long: Histone H2B (134 aa).

Residues M1–K10 show a composition bias toward polar residues. 2 disordered regions span residues M1–K29 and V113–R134. Over residues A12–K29 the composition is skewed to basic and acidic residues. A compositionally biased stretch (polar residues) spans G125–R134.

It belongs to the histone H2B family. The nucleosome is a histone octamer containing two molecules each of H2A, H2B, H3 and H4 assembled in one H3-H4 heterotetramer and two H2A-H2B heterodimers. The octamer wraps approximately 147 bp of DNA.

It localises to the nucleus. The protein localises to the chromosome. In terms of biological role, core component of nucleosome. Nucleosomes wrap and compact DNA into chromatin, limiting DNA accessibility to the cellular machineries which require DNA as a template. Histones thereby play a central role in transcription regulation, DNA repair, DNA replication and chromosomal stability. DNA accessibility is regulated via a complex set of post-translational modifications of histones, also called histone code, and nucleosome remodeling. In Entamoeba invadens, this protein is Histone H2B.